A 533-amino-acid chain; its full sequence is Glucose-6-phosphate isomerase (533 aa).

Glutamate 322 serves as the catalytic Proton donor. Catalysis depends on residues histidine 351 and lysine 455.

Belongs to the GPI family.

It localises to the cytoplasm. The enzyme catalyses alpha-D-glucose 6-phosphate = beta-D-fructose 6-phosphate. Its pathway is carbohydrate biosynthesis; gluconeogenesis. It functions in the pathway carbohydrate degradation; glycolysis; D-glyceraldehyde 3-phosphate and glycerone phosphate from D-glucose: step 2/4. Catalyzes the reversible isomerization of glucose-6-phosphate to fructose-6-phosphate. This is Glucose-6-phosphate isomerase from Desulfitobacterium hafniense (strain DSM 10664 / DCB-2).